A 107-amino-acid polypeptide reads, in one-letter code: ATP synthase subunit c (107 aa).

3 consecutive transmembrane segments (helical) span residues 4–24, 29–49, and 74–94; these read IVFL…SMNQ, FSIL…AIGM, and MFIA…IALI.

The protein belongs to the ATPase C chain family. F-type ATPases have 2 components, F(1) - the catalytic core - and F(0) - the membrane proton channel. F(1) has five subunits: alpha(3), beta(3), gamma(1), delta(1), epsilon(1). F(0) has three main subunits: a(1), b(2) and c(10-14). The alpha and beta chains form an alternating ring which encloses part of the gamma chain. F(1) is attached to F(0) by a central stalk formed by the gamma and epsilon chains, while a peripheral stalk is formed by the delta and b chains.

Its subcellular location is the cell inner membrane. Its function is as follows. F(1)F(0) ATP synthase produces ATP from ADP in the presence of a proton or sodium gradient. F-type ATPases consist of two structural domains, F(1) containing the extramembraneous catalytic core and F(0) containing the membrane proton channel, linked together by a central stalk and a peripheral stalk. During catalysis, ATP synthesis in the catalytic domain of F(1) is coupled via a rotary mechanism of the central stalk subunits to proton translocation. In terms of biological role, key component of the F(0) channel; it plays a direct role in translocation across the membrane. A homomeric c-ring of between 10-14 subunits forms the central stalk rotor element with the F(1) delta and epsilon subunits. This chain is ATP synthase subunit c, found in Campylobacter lari (strain RM2100 / D67 / ATCC BAA-1060).